The primary structure comprises 1131 residues: Probable chloride channel protein UM03490-D (1131 aa).

Helical transmembrane passes span 137 to 157 (GVIV…SLAT), 206 to 226 (VTVT…PILP), 305 to 325 (FPAW…CAHL), 341 to 361 (IKCI…TLAI), 380 to 397 (GPAV…ASFF), 414 to 434 (SSAA…LFSL), 485 to 505 (FEIM…AFVI), 518 to 538 (YLVK…AFVG), 577 to 597 (MVNS…VSYG), 603 to 623 (GIFV…GILV), 643 to 663 (VPCI…LAGV), and 680 to 702 (ALTY…DWFS). Disordered regions lie at residues 815 to 835 (DGVE…LSVA) and 858 to 928 (ATGA…AGGG). Residues 866 to 877 (GLGSTSATGVAS) are compositionally biased toward low complexity. The region spanning 944-1000 (IDPTPLIVQPGMPLETVMDMFKNLGPRVILVVEYGRLSGLVTVKDVLKRIAMQEKAE) is the CBS domain. Low complexity predominate over residues 1061–1078 (RASASRGGAPGSQAGQAR). Residues 1061 to 1131 (RASASRGGAP…VLGAQDDDDE (71 aa)) form a disordered region. Positions 1104 to 1113 (STRQTSATKN) are enriched in polar residues.

The protein belongs to the chloride channel (TC 2.A.49) family.

Its subcellular location is the membrane. Functionally, voltage-gated chloride channel. The chain is Probable chloride channel protein UM03490-D from Mycosarcoma maydis (Corn smut fungus).